The primary structure comprises 413 residues: Serine hydroxymethyltransferase (413 aa).

Residues L120 and 124–126 (GHL) contribute to the (6S)-5,6,7,8-tetrahydrofolate site. N6-(pyridoxal phosphate)lysine is present on K228.

This sequence belongs to the SHMT family. Homodimer. Requires pyridoxal 5'-phosphate as cofactor.

It localises to the cytoplasm. The catalysed reaction is (6R)-5,10-methylene-5,6,7,8-tetrahydrofolate + glycine + H2O = (6S)-5,6,7,8-tetrahydrofolate + L-serine. It functions in the pathway one-carbon metabolism; tetrahydrofolate interconversion. It participates in amino-acid biosynthesis; glycine biosynthesis; glycine from L-serine: step 1/1. In terms of biological role, catalyzes the reversible interconversion of serine and glycine with tetrahydrofolate (THF) serving as the one-carbon carrier. This reaction serves as the major source of one-carbon groups required for the biosynthesis of purines, thymidylate, methionine, and other important biomolecules. Also exhibits THF-independent aldolase activity toward beta-hydroxyamino acids, producing glycine and aldehydes, via a retro-aldol mechanism. The chain is Serine hydroxymethyltransferase from Agathobacter rectalis (strain ATCC 33656 / DSM 3377 / JCM 17463 / KCTC 5835 / VPI 0990) (Eubacterium rectale).